We begin with the raw amino-acid sequence, 878 residues long: Bifunctional heparan sulfate N-deacetylase/N-sulfotransferase 1 (878 aa).

The Cytoplasmic segment spans residues methionine 1 to glutamine 17. The segment at methionine 1 to phenylalanine 169 is sufficient for localization to Golgi membrane. Residues leucine 18–leucine 38 traverse the membrane as a helical; Signal-anchor for type II membrane protein segment. The Lumenal segment spans residues tyrosine 39 to arginine 878. The tract at residues glycine 40–glutamate 594 is heparan sulfate N-deacetylase 1. The segment at proline 47–lysine 71 is disordered. Asparagine 231, asparagine 347, and asparagine 397 each carry an N-linked (GlcNAc...) asparagine glycan. Residues lysine 595–arginine 878 form a heparan sulfate N-sulfotransferase 1 region. Catalysis depends on lysine 610, which acts as the For sulfotransferase activity. Position 610 to 614 (lysine 610 to threonine 614) interacts with adenosine 3',5'-bisphosphate. Residue asparagine 663 is glycosylated (N-linked (GlcNAc...) asparagine). Adenosine 3',5'-bisphosphate contacts are provided by serine 708 and tryptophan 813. An intrachain disulfide couples cysteine 814 to cysteine 824. Residue lysine 829–tyrosine 833 coordinates adenosine 3',5'-bisphosphate.

The protein belongs to the sulfotransferase 1 family. NDST subfamily. In terms of assembly, monomer.

The protein resides in the golgi apparatus membrane. It is found in the golgi apparatus. The protein localises to the trans-Golgi network membrane. The enzyme catalyses alpha-D-glucosaminyl-[heparan sulfate](n) + 3'-phosphoadenylyl sulfate = N-sulfo-alpha-D-glucosaminyl-[heparan sulfate](n) + adenosine 3',5'-bisphosphate + 2 H(+). The protein operates within glycan metabolism; heparan sulfate biosynthesis. Its pathway is glycan metabolism; heparin biosynthesis. Its function is as follows. Essential bifunctional enzyme that catalyzes both the N-deacetylation and the N-sulfation of glucosamine (GlcNAc) of the glycosaminoglycan in heparan sulfate. Modifies the GlcNAc-GlcA disaccharide repeating sugar backbone to make N-sulfated heparosan, a prerequisite substrate for later modifications in heparin biosynthesis. Plays a role in determining the extent and pattern of sulfation of heparan sulfate. This Xenopus tropicalis (Western clawed frog) protein is Bifunctional heparan sulfate N-deacetylase/N-sulfotransferase 1 (ndst1).